We begin with the raw amino-acid sequence, 239 residues long: Adapter protein MecA (239 aa).

A compositionally biased stretch (basic and acidic residues) spans 118–128 (EQRTKEKEAQG). The disordered stretch occupies residues 118–137 (EQRTKEKEAQGSKRQKSSAR).

The protein belongs to the MecA family. Homodimer.

In terms of biological role, enables the recognition and targeting of unfolded and aggregated proteins to the ClpC protease or to other proteins involved in proteolysis. The polypeptide is Adapter protein MecA (Staphylococcus aureus (strain USA300)).